The following is a 58-amino-acid chain: UPF0391 membrane protein MADE_1011595 (58 aa).

2 consecutive transmembrane segments (helical) span residues 4-24 and 27-47; these read WAIT…GGIA and ATGI…ISLI.

This sequence belongs to the UPF0391 family.

The protein localises to the cell membrane. The protein is UPF0391 membrane protein MADE_1011595 of Alteromonas mediterranea (strain DSM 17117 / CIP 110805 / LMG 28347 / Deep ecotype).